The chain runs to 322 residues: UDP-N-acetylenolpyruvoylglucosamine reductase (322 aa).

Residues 36 to 202 form the FAD-binding PCMH-type domain; the sequence is RAGGPAQVLF…TSVLFEGVPG (167 aa). R182 is a catalytic residue. The active-site Proton donor is the S231. The active site involves E301.

The protein belongs to the MurB family. The cofactor is FAD.

The protein localises to the cytoplasm. The enzyme catalyses UDP-N-acetyl-alpha-D-muramate + NADP(+) = UDP-N-acetyl-3-O-(1-carboxyvinyl)-alpha-D-glucosamine + NADPH + H(+). It participates in cell wall biogenesis; peptidoglycan biosynthesis. Cell wall formation. The sequence is that of UDP-N-acetylenolpyruvoylglucosamine reductase from Brucella suis biovar 1 (strain 1330).